Consider the following 286-residue polypeptide: MESELEALAPRPASPAEPPFQALVEAAGGRGQVLLVGELWEREQSRALLRDFAGAVFPPESAPGKPGCAEAESAGTAAATESHGAPGAKAERAIRSPLVFVLCRVGSLTSRESRRRLREMLRDVRDRRCEGAALVGVLVADTGADDARAPELQLLETLLRTVFGRQVGGPVQAAAFRPGCPASSLAVQEAACRALQAAGPGRPEGAWERPARTGLLTCFSWGPRRQRKNRGVTSSQGPAQEHLQFSEEELALTPVFPNGDCEDRGNGSRAQDGGVHIPPDPPEDTR.

Disordered stretches follow at residues 59–89 (PESA…PGAK) and 225–286 (RQRK…EDTR). Residues 69-85 (AEAESAGTAAATESHGA) are compositionally biased toward low complexity.

This is an uncharacterized protein from Mus musculus (Mouse).